An 83-amino-acid chain; its full sequence is MSDNTTLAPPAASQAPATPRKGPPKFKQRQTRQFKSKPPKKGVKGFGDDIPGMEGLGTDITVICPWEAFSHLELHELAQFGII.

Positions 1–19 (MSDNTTLAPPAASQAPATP) are enriched in low complexity. The segment at 1–51 (MSDNTTLAPPAASQAPATPRKGPPKFKQRQTRQFKSKPPKKGVKGFGDDIP) is disordered. The segment covering 22–43 (GPPKFKQRQTRQFKSKPPKKGV) has biased composition (basic residues).

Belongs to the rod/cone cGMP-PDE gamma subunit family. In terms of assembly, tetramer composed of two catalytic chains (alpha and beta), and two inhibitory chains (gamma).

The enzyme catalyses 3',5'-cyclic GMP + H2O = GMP + H(+). Its function is as follows. Participates in processes of transmission and amplification of the visual signal. cGMP-PDEs are the effector molecules in G-protein-mediated phototransduction in vertebrate rods and cones. The protein is Retinal cone rhodopsin-sensitive cGMP 3',5'-cyclic phosphodiesterase subunit gamma (PDE6H) of Ictidomys tridecemlineatus (Thirteen-lined ground squirrel).